Reading from the N-terminus, the 206-residue chain is Probable GTP-binding protein EngB (206 aa).

Residues histidine 23 to lysine 202 form the EngB-type G domain. Residues glycine 31–serine 38, glycine 58–threonine 62, aspartate 83–glycine 86, threonine 150–aspartate 153, and phenylalanine 181–serine 183 each bind GTP. Residues serine 38 and threonine 60 each coordinate Mg(2+).

Belongs to the TRAFAC class TrmE-Era-EngA-EngB-Septin-like GTPase superfamily. EngB GTPase family. Requires Mg(2+) as cofactor.

Functionally, necessary for normal cell division and for the maintenance of normal septation. The sequence is that of Probable GTP-binding protein EngB from Myxococcus xanthus (strain DK1622).